The sequence spans 384 residues: Chaperone protein DnaJ (384 aa).

Residues 4 to 68 (DFYEILGVSR…EKRQMYDQMG (65 aa)) form the J domain. 2 disordered regions span residues 29 to 60 (REYH…DEEK) and 73 to 131 (EQAE…GQDL). Residues 42 to 60 (EEKFKQAKKAKEVLTDEEK) are compositionally biased toward basic and acidic residues. Gly residues predominate over residues 80–101 (GAGGGGGRGGMGGDPFGGGAGG). Low complexity predominate over residues 102–111 (FDMQDIFDQF). The span at 112 to 121 (FGGGGRGGRG) shows a compositional bias: gly residues. Residues 145-227 (GATKQLNVTR…CRGNGVVQND (83 aa)) form a CR-type zinc finger. Zn(2+)-binding residues include C158, C161, C175, and C178. CXXCXGXG motif repeat units follow at residues 158-165 (CDDCDGAG), 175-182 (CPECNGQG), 201-208 (CRRCDGEG), and 215-222 (CSTCRGNG). Residues 160-191 (DCDGAGHPPGADSETCPECNGQGQTTQVQQTP) form a disordered region. Low complexity predominate over residues 180 to 190 (GQGQTTQVQQT). Zn(2+) is bound by residues C201, C204, C215, and C218.

It belongs to the DnaJ family. In terms of assembly, homodimer. Zn(2+) is required as a cofactor.

The protein resides in the cytoplasm. Participates actively in the response to hyperosmotic and heat shock by preventing the aggregation of stress-denatured proteins and by disaggregating proteins, also in an autonomous, DnaK-independent fashion. Unfolded proteins bind initially to DnaJ; upon interaction with the DnaJ-bound protein, DnaK hydrolyzes its bound ATP, resulting in the formation of a stable complex. GrpE releases ADP from DnaK; ATP binding to DnaK triggers the release of the substrate protein, thus completing the reaction cycle. Several rounds of ATP-dependent interactions between DnaJ, DnaK and GrpE are required for fully efficient folding. Also involved, together with DnaK and GrpE, in the DNA replication of plasmids through activation of initiation proteins. The polypeptide is Chaperone protein DnaJ (Haloarcula marismortui (strain ATCC 43049 / DSM 3752 / JCM 8966 / VKM B-1809) (Halobacterium marismortui)).